The chain runs to 452 residues: 23S rRNA (uracil(1939)-C(5))-methyltransferase RlmD (452 aa).

The tract at residues 1–25 (MSKKKSNSGLRFQPAGGNRTPQVPV) is disordered. A TRAM domain is found at 22 to 80 (QVPVGKKQRLDIERLAGDGRGIAFLDGRTWFVSGALAGEAVEARVLNARGKVVEARLER). The [4Fe-4S] cluster site is built by Cys-93, Cys-99, Cys-102, and Cys-181. 6 residues coordinate S-adenosyl-L-methionine: Gln-285, Phe-314, Asn-319, Glu-335, Asp-362, and Asp-383. Residue Cys-409 is the Nucleophile of the active site.

Belongs to the class I-like SAM-binding methyltransferase superfamily. RNA M5U methyltransferase family. RlmD subfamily.

The enzyme catalyses uridine(1939) in 23S rRNA + S-adenosyl-L-methionine = 5-methyluridine(1939) in 23S rRNA + S-adenosyl-L-homocysteine + H(+). Functionally, catalyzes the formation of 5-methyl-uridine at position 1939 (m5U1939) in 23S rRNA. This Pseudomonas putida (strain ATCC 47054 / DSM 6125 / CFBP 8728 / NCIMB 11950 / KT2440) protein is 23S rRNA (uracil(1939)-C(5))-methyltransferase RlmD.